A 485-amino-acid polypeptide reads, in one-letter code: UDP-glycosyltransferase 71B2 (485 aa).

UDP-alpha-D-glucose contacts are provided by residues Ser-287, Ala-354 to Gln-356, His-371 to Glu-379, and Tyr-393 to Gln-396.

Belongs to the UDP-glycosyltransferase family.

Functionally, glucosyltransferase that glucosylates the cell wall inhibitor hypostatin in vivo to form a bioactive glucoside. The sequence is that of UDP-glycosyltransferase 71B2 (UGT71B2) from Arabidopsis thaliana (Mouse-ear cress).